The chain runs to 89 residues: Small ribosomal subunit protein uS15 (89 aa).

The span at 1 to 11 (MSITAERKAEV) shows a compositional bias: basic and acidic residues. The interval 1-24 (MSITAERKAEVIKTSATKAGDTGS) is disordered.

Belongs to the universal ribosomal protein uS15 family. Part of the 30S ribosomal subunit. Forms a bridge to the 50S subunit in the 70S ribosome, contacting the 23S rRNA.

Its function is as follows. One of the primary rRNA binding proteins, it binds directly to 16S rRNA where it helps nucleate assembly of the platform of the 30S subunit by binding and bridging several RNA helices of the 16S rRNA. Functionally, forms an intersubunit bridge (bridge B4) with the 23S rRNA of the 50S subunit in the ribosome. The protein is Small ribosomal subunit protein uS15 of Rhodopseudomonas palustris (strain TIE-1).